The chain runs to 556 residues: Glutamine--tRNA ligase (556 aa).

Positions 35 to 45 (PEPNGYLHIGH) match the 'HIGH' region motif. ATP contacts are provided by residues 36–38 (EPN) and 42–48 (HIGHAKS). Positions 68 and 213 each coordinate L-glutamine. Residues Thr232 and 262–263 (RL) each bind ATP. Positions 269–273 (VTSKR) match the 'KMSKS' region motif.

The protein belongs to the class-I aminoacyl-tRNA synthetase family. Monomer.

It is found in the cytoplasm. It catalyses the reaction tRNA(Gln) + L-glutamine + ATP = L-glutaminyl-tRNA(Gln) + AMP + diphosphate. The sequence is that of Glutamine--tRNA ligase from Pseudomonas aeruginosa (strain ATCC 15692 / DSM 22644 / CIP 104116 / JCM 14847 / LMG 12228 / 1C / PRS 101 / PAO1).